The primary structure comprises 229 residues: Lipoprotein-releasing system ATP-binding protein LolD (229 aa).

One can recognise an ABC transporter domain in the interval 7-229 (LQCINLTKSF…KNGQLFNNKN (223 aa)). 43–50 (GKSGSGKS) provides a ligand contact to ATP.

The protein belongs to the ABC transporter superfamily. Lipoprotein translocase (TC 3.A.1.125) family. The complex is composed of two ATP-binding proteins (LolD) and two transmembrane proteins (LolC and LolE).

The protein localises to the cell inner membrane. Part of the ABC transporter complex LolCDE involved in the translocation of mature outer membrane-directed lipoproteins, from the inner membrane to the periplasmic chaperone, LolA. Responsible for the formation of the LolA-lipoprotein complex in an ATP-dependent manner. The sequence is that of Lipoprotein-releasing system ATP-binding protein LolD from Buchnera aphidicola subsp. Schizaphis graminum (strain Sg).